Reading from the N-terminus, the 377-residue chain is tRNA pseudouridine synthase Pus10 (377 aa).

Asp-206 acts as the Nucleophile in catalysis. Positions 270 and 339 each coordinate substrate.

The protein belongs to the pseudouridine synthase Pus10 family.

It carries out the reaction uridine(54) in tRNA = pseudouridine(54) in tRNA. The enzyme catalyses uridine(55) in tRNA = pseudouridine(55) in tRNA. In terms of biological role, responsible for synthesis of pseudouridine from uracil-54 and uracil-55 in the psi GC loop of transfer RNAs. The chain is tRNA pseudouridine synthase Pus10 from Picrophilus torridus (strain ATCC 700027 / DSM 9790 / JCM 10055 / NBRC 100828 / KAW 2/3).